A 304-amino-acid chain; its full sequence is UDP-3-O-acyl-N-acetylglucosamine deacetylase (304 aa).

Residues His78, His237, and Asp241 each coordinate Zn(2+). Catalysis depends on His264, which acts as the Proton donor.

This sequence belongs to the LpxC family. Zn(2+) serves as cofactor.

The enzyme catalyses a UDP-3-O-[(3R)-3-hydroxyacyl]-N-acetyl-alpha-D-glucosamine + H2O = a UDP-3-O-[(3R)-3-hydroxyacyl]-alpha-D-glucosamine + acetate. It functions in the pathway glycolipid biosynthesis; lipid IV(A) biosynthesis; lipid IV(A) from (3R)-3-hydroxytetradecanoyl-[acyl-carrier-protein] and UDP-N-acetyl-alpha-D-glucosamine: step 2/6. Functionally, catalyzes the hydrolysis of UDP-3-O-myristoyl-N-acetylglucosamine to form UDP-3-O-myristoylglucosamine and acetate, the committed step in lipid A biosynthesis. The chain is UDP-3-O-acyl-N-acetylglucosamine deacetylase from Legionella pneumophila (strain Paris).